The primary structure comprises 951 residues: Multiple C2 and transmembrane domain-containing protein 1 (951 aa).

4 disordered regions span residues 29–79 (LGVG…RWSG), 92–117 (SSSQPNLCCSSPEPLEPGGAGRAEQG), 129–198 (LPVA…QKSS), and 210–231 (LEPAPPPAEPARGPAEPQALQK). Residues 31 to 43 (VGKGKGGGGGRAG) show a composition bias toward gly residues. Residues 147–168 (PGGRSPDSAPSSSSASSSLSSS) are compositionally biased toward low complexity. A compositionally biased stretch (basic and acidic residues) spans 174–184 (RGDRVRDESTR). Residues 219-228 (PARGPAEPQA) are compositionally biased toward low complexity. 3 C2 domains span residues 240–358 (KIST…DVTL), 404–521 (QTQS…KLEL), and 555–676 (QKER…AYVL). Ca(2+)-binding residues include Asp-275, Asp-281, Asp-328, Asp-330, Asp-336, Asp-438, Asp-444, Asp-491, Asp-493, Asp-499, Asp-594, Asp-600, Asp-646, Asp-648, and Asp-654. The next 2 helical transmembrane spans lie at 763 to 783 (FVLFLLIVWNFELYMIPLLLL) and 866 to 886 (PFLSWLAIVALCVFTAILYFI).

The protein belongs to the MCTP family. Ca(2+) serves as cofactor.

It is found in the cytoplasmic vesicle. It localises to the secretory vesicle. Its subcellular location is the synaptic vesicle membrane. The protein resides in the recycling endosome. The protein localises to the endoplasmic reticulum membrane. Its function is as follows. Calcium sensor which is essential for the stabilization of normal baseline neurotransmitter release and for the induction and long-term maintenance of presynaptic homeostatic plasticity. The chain is Multiple C2 and transmembrane domain-containing protein 1 from Mus musculus (Mouse).